The following is a 254-amino-acid chain: 14-3-3 protein 2 (254 aa).

The protein belongs to the 14-3-3 family. In terms of assembly, homodimer.

This chain is 14-3-3 protein 2 (TFT2), found in Solanum lycopersicum (Tomato).